The primary structure comprises 260 residues: MEQTLKGDETGWWVVSDAVQIWLPQGELPCGTATKWSLQGKTARQIGEWQEQPVWLVCQGRDTDMASVRQLLDQDVGLFQLAGRGVQLAEFYRSHRFCGYCGHEMVRSKTELACLCHHCKERYYPQIAPCIIVAIRRGEEILLAQHNRHRGNMYTVLAGFVEVGETLEQTVVREVMEESQVQIKNLRYVSSQPWPFPHSLMMAFMAEYAGGEIKHDPKELRDAGWFRYDQLPQLPPPGTVARRLIEDTVVLCRAYHENEG.

Arg69 serves as a coordination point for substrate. 2 residues coordinate Zn(2+): Cys98 and Cys101. Residue Glu111 participates in substrate binding. Residues Cys116 and Cys119 each coordinate Zn(2+). Tyr124 lines the substrate pocket. A Nudix hydrolase domain is found at 125–248; the sequence is PQIAPCIIVA…TVARRLIEDT (124 aa). 3 residues coordinate a divalent metal cation: Ala158, Glu174, and Glu178. The Nudix box signature appears at 159 to 180; the sequence is GFVEVGETLEQTVVREVMEESQ. Position 192-199 (192-199) interacts with substrate; it reads QPWPFPHS. Glu219 is an a divalent metal cation binding site. Ala241 contacts substrate.

Belongs to the Nudix hydrolase family. NudC subfamily. In terms of assembly, homodimer. Requires Mg(2+) as cofactor. Mn(2+) is required as a cofactor. It depends on Zn(2+) as a cofactor.

The enzyme catalyses a 5'-end NAD(+)-phospho-ribonucleoside in mRNA + H2O = a 5'-end phospho-adenosine-phospho-ribonucleoside in mRNA + beta-nicotinamide D-ribonucleotide + 2 H(+). It catalyses the reaction NAD(+) + H2O = beta-nicotinamide D-ribonucleotide + AMP + 2 H(+). The catalysed reaction is NADH + H2O = reduced beta-nicotinamide D-ribonucleotide + AMP + 2 H(+). Its function is as follows. mRNA decapping enzyme that specifically removes the nicotinamide adenine dinucleotide (NAD) cap from a subset of mRNAs by hydrolyzing the diphosphate linkage to produce nicotinamide mononucleotide (NMN) and 5' monophosphate mRNA. The NAD-cap is present at the 5'-end of some mRNAs and stabilizes RNA against 5'-processing. Has preference for mRNAs with a 5'-end purine. Catalyzes the hydrolysis of a broad range of dinucleotide pyrophosphates. The sequence is that of NAD-capped RNA hydrolase NudC from Pectobacterium carotovorum subsp. carotovorum (strain PC1).